A 250-amino-acid chain; its full sequence is MAKLTARDLKLSFGNVEVLKGVNLEIKERTITALMGPSGSGKSTLLRVFNRLIELYPEARVSGEVLLDGQDVFKMDVIELRRRVQMIFQIPNPIPNLSIFENVALGLKLNRIVKSKKELEARVRQALEKAQLWDEVKNRLDAPAGKLSGGQQQRLCVARALAFDPEVLLADEPTANLDPENTAKLESLFLELKKDMTIVLVTHFPAQAARVSDYVAFLYKGQIVEVGPTKEVFTNPRHELTEKYVTGKLY.

The 242-residue stretch at 4-245 (LTARDLKLSF…PRHELTEKYV (242 aa)) folds into the ABC transporter domain. 36 to 43 (GPSGSGKS) provides a ligand contact to ATP.

Belongs to the ABC transporter superfamily. Phosphate importer (TC 3.A.1.7) family. In terms of assembly, the complex is composed of two ATP-binding proteins (PstB), two transmembrane proteins (PstC and PstA) and a solute-binding protein (PstS).

The protein resides in the cell membrane. The catalysed reaction is phosphate(out) + ATP + H2O = ADP + 2 phosphate(in) + H(+). Part of the ABC transporter complex PstSACB involved in phosphate import. Responsible for energy coupling to the transport system. The sequence is that of Phosphate import ATP-binding protein PstB from Pyrobaculum aerophilum (strain ATCC 51768 / DSM 7523 / JCM 9630 / CIP 104966 / NBRC 100827 / IM2).